The sequence spans 1242 residues: Myosin-16 (1242 aa).

Residues 6-55 (MVDSHVWVEDPERAWIDGVVLNIKGEEAEIKTNDGRDVIANLSRLYPKDT) form the Myosin N-terminal SH3-like domain. One can recognise a Myosin motor domain in the interval 60–729 (EGVEDMTRLS…QMAELDAHRT (670 aa)). ATP contacts are provided by residues 154-161 (GESGSGKT) and 207-215 (NNNSSRFGK). Actin-binding stretches follow at residues 493–527 (LIEKKPGGIIALLDEACMLPKSTPETFSEKLYHTF), 529–552 (DHKRFMKPKLTRSDFTLVHYAGDV), 587–610 (FPPLPKESSKSKFSSIGARFKLQL), and 610–632 (LQQLMETLNSTEPHYIRCVKPNN). IQ domains follow at residues 732 to 761 (LGESARMIQGQVRTRLTRERFVLMRRASVN), 755 to 784 (MRRASVNIQANWRGNIARKISKEMRREEAA), 780 to 809 (REEAAIKIQKNLRRQIAKKDYGKTKSSALT), 803 to 832 (TKSSALTLQSGVRTMAARHEFRYKLTTRAA), 828 to 857 (TTRAATVIQAYWRGYSAISDYKKLKRVSLL), and 851 to 880 (LKRVSLLCKSNLRGRIARKQLGQSKQADRK). Disordered stretches follow at residues 869 to 893 (KQLGQSKQADRKEETEKERKVELSN) and 908 to 1042 (EQSD…ERKT). Residues 876–893 (QADRKEETEKERKVELSN) are compositionally biased toward basic and acidic residues. 6 tandem repeats follow at residues 876 to 908 (QADRKEETEKERKVELSNRAEEAVDMSFVLHSE), 909 to 940 (QSDDAESGHGRKAKLSIESEDGLDKSSVLHSE), 941 to 965 (QSDDEELGHERKTKLSIESEDGHSD), 966 to 997 (QSDDEEIEHERKTKHCIQAEDGIEKSYVMHSD), 998 to 1029 (QSDDEEIGHKRKTKHSIQAEDGIEKSFVVHSD), and 1030 to 1061 (QSDDEEIGHERKTKHAIQVEDGIQKSFVTCSE). Residues 876 to 1061 (QADRKEETEK…IQKSFVTCSE (186 aa)) are 6 X 33 AA repeats of Q-S-D-D-x-E-E-x(2)-H-x-R-K-x-K-x(2)-I-x(2)-E-D-G-x(3)-S-x-V-x-H-S-x. Basic and acidic residues predominate over residues 948–966 (GHERKTKLSIESEDGHSDQ). The stretch at 1079–1142 (DTEIESLTAE…QLQDSLNRLL (64 aa)) forms a coiled coil. Residues 1175-1242 (DLADSSENSE…DKEGGFEDYF (68 aa)) form a disordered region. Over residues 1179–1191 (SSENSEASSSDSD) the composition is skewed to low complexity. The span at 1199–1224 (PSSDNFSTFNPNQLQVIVQDLSTTEA) shows a compositional bias: polar residues. The segment covering 1225-1242 (KGTESYDSDKEGGFEDYF) has biased composition (basic and acidic residues).

This sequence belongs to the TRAFAC class myosin-kinesin ATPase superfamily. Myosin family. Plant myosin class XI subfamily. In terms of assembly, homodimer. Expressed in flowers and leaves.

Its subcellular location is the cytoplasm. Myosin heavy chain that is required for the cell cycle-regulated transport of various organelles and proteins for their segregation. Functions by binding with its tail domain to receptor proteins on organelles and exerting force with its N-terminal motor domain against actin filaments, thereby transporting its cargo along polarized actin cables. The sequence is that of Myosin-16 (XI-J) from Arabidopsis thaliana (Mouse-ear cress).